Consider the following 424-residue polypeptide: Tol-Pal system protein TolB (424 aa).

Residues 1–20 form the signal peptide; the sequence is MKQFIVFILSLYTTLSWAVL.

The protein belongs to the TolB family. As to quaternary structure, the Tol-Pal system is composed of five core proteins: the inner membrane proteins TolA, TolQ and TolR, the periplasmic protein TolB and the outer membrane protein Pal. They form a network linking the inner and outer membranes and the peptidoglycan layer.

It is found in the periplasm. In terms of biological role, part of the Tol-Pal system, which plays a role in outer membrane invagination during cell division and is important for maintaining outer membrane integrity. The sequence is that of Tol-Pal system protein TolB from Vesicomyosocius okutanii subsp. Calyptogena okutanii (strain HA).